The following is a 602-amino-acid chain: Elongation factor 4 (602 aa).

The region spanning 7–189 is the tr-type G domain; that stretch reads KHIRNFSIVA…AIVDKIPSPQ (183 aa). GTP-binding positions include 19–24 and 136–139; these read DHGKST and NKID.

This sequence belongs to the TRAFAC class translation factor GTPase superfamily. Classic translation factor GTPase family. LepA subfamily.

Its subcellular location is the cell membrane. The catalysed reaction is GTP + H2O = GDP + phosphate + H(+). Required for accurate and efficient protein synthesis under certain stress conditions. May act as a fidelity factor of the translation reaction, by catalyzing a one-codon backward translocation of tRNAs on improperly translocated ribosomes. Back-translocation proceeds from a post-translocation (POST) complex to a pre-translocation (PRE) complex, thus giving elongation factor G a second chance to translocate the tRNAs correctly. Binds to ribosomes in a GTP-dependent manner. This Clostridium kluyveri (strain ATCC 8527 / DSM 555 / NBRC 12016 / NCIMB 10680 / K1) protein is Elongation factor 4.